We begin with the raw amino-acid sequence, 1019 residues long: Probable LRR receptor-like serine/threonine-protein kinase At1g29720 (1019 aa).

The signal sequence occupies residues 1–19; it reads MSIILWSFFLFFTIILSSL. Residues 20-615 are Extracellular-facing; that stretch reads TNITTLASFS…EKTKHHIKYP (596 aa). 3 N-linked (GlcNAc...) asparagine glycosylation sites follow: Asn21, Asn79, and Asn90. LRR repeat units lie at residues 93–117, 118–141, 143–165, 166–189, 190–212, 214–236, 237–261, 263–283, 284–307, 308–330, 332–351, 352–374, and 375–398; these read ICRI…LTKL, PYLK…WAKM, YLTS…LQNF, KNLT…LGNL, TSLT…TLAR, VNLE…YIGN, WTRL…VVRL, NLLE…NLSS, KGLK…IWNL, TDLK…VQNP, KNIY…GGLL, NSQS…QKGS, and TINT…AVPA. N-linked (GlcNAc...) asparagine glycans are attached at residues Asn153, Asn167, and Asn188. 2 N-linked (GlcNAc...) asparagine glycosylation sites follow: Asn225 and Asn236. N-linked (GlcNAc...) asparagine glycans are attached at residues Asn280 and Asn306. Asn363, Asn387, Asn469, and Asn558 each carry an N-linked (GlcNAc...) asparagine glycan. A helical membrane pass occupies residues 616–636; the sequence is LILGASGALVTIVLLAVGIYA. Over 637–1019 the chain is Cytoplasmic; the sequence is RGIYRRDNNR…STVENSSSSL (383 aa). The Protein kinase domain occupies 673-946; the sequence is FDQANKLGEG…EAVKMLEGEI (274 aa). ATP contacts are provided by residues 679-687 and Lys701; that span reads LGEGGFGSV. Tyr746 is modified (phosphotyrosine). Asp797 (proton acceptor) is an active-site residue. The residue at position 830 (Ser830) is a Phosphoserine. Residues Thr831 and Thr836 each carry the phosphothreonine modification. Residue Tyr844 is modified to Phosphotyrosine.

The protein belongs to the protein kinase superfamily. Ser/Thr protein kinase family.

Its subcellular location is the cell membrane. It catalyses the reaction L-seryl-[protein] + ATP = O-phospho-L-seryl-[protein] + ADP + H(+). The catalysed reaction is L-threonyl-[protein] + ATP = O-phospho-L-threonyl-[protein] + ADP + H(+). The protein is Probable LRR receptor-like serine/threonine-protein kinase At1g29720 (RFK1) of Arabidopsis thaliana (Mouse-ear cress).